Consider the following 234-residue polypeptide: Sugar fermentation stimulation protein A (234 aa).

Positions 201 to 220 form a DNA-binding region, H-T-H motif; it reads LLSEAQQRGVEILAYKAEIS.

Belongs to the SfsA family.

Functionally, binds to DNA non-specifically. Could be a regulatory factor involved in maltose metabolism. In Shigella dysenteriae serotype 1 (strain Sd197), this protein is Sugar fermentation stimulation protein A.